Consider the following 666-residue polypeptide: Translation factor guf1, mitochondrial (666 aa).

A mitochondrion-targeting transit peptide spans 1-44 (MRGCLQLGRWLSAAPRCQAASLRPPTVFPSYRYNRSFSTTTIYY). Residues 68 to 248 (ERFRNFCIVA…TVVEKVPAPI (181 aa)) form the tr-type G domain. Residues 77 to 84 (AHVDHGKS), 141 to 145 (DTPGH), and 195 to 198 (NKVD) contribute to the GTP site.

The protein belongs to the TRAFAC class translation factor GTPase superfamily. Classic translation factor GTPase family. LepA subfamily.

Its subcellular location is the mitochondrion inner membrane. It catalyses the reaction GTP + H2O = GDP + phosphate + H(+). Its function is as follows. Promotes mitochondrial protein synthesis. May act as a fidelity factor of the translation reaction, by catalyzing a one-codon backward translocation of tRNAs on improperly translocated ribosomes. Binds to mitochondrial ribosomes in a GTP-dependent manner. This chain is Translation factor guf1, mitochondrial (guf1), found in Penicillium rubens (strain ATCC 28089 / DSM 1075 / NRRL 1951 / Wisconsin 54-1255) (Penicillium chrysogenum).